Here is a 285-residue protein sequence, read N- to C-terminus: MTAITEKETSKFVRIQDGDLDLNIHYNDCGEGKETVVMLHGSGPGASGWANFNRNIEPLVNAGFRVILMDCPGWSKSDSIVSTGSRSDLNARVLKGLVDKLDLDKIHILGNSMGGHTAVAFSLTWPERVGKLVLMGGGTGGVSPFVPMPSEGIKLLNGLYREPTIENLKKMMSIFVYDTSDLTEELFQTRLDNMLARKDHLENFTASLAANLKQFPDFGHRLGEINAETLVIWGRNDRFVPLDTGLRLVAGISNSQLHVFNKCGHWAQWEHADTFNRMVLDFLTH.

H265 acts as the Proton acceptor in catalysis.

The protein belongs to the AB hydrolase superfamily. MhpC family. Homodimer.

It catalyses the reaction (2Z,4E)-2-hydroxy-6-oxonona-2,4-dienedioate + H2O = (2Z)-2-hydroxypenta-2,4-dienoate + succinate + H(+). The enzyme catalyses (2Z,4E,7E)-2-hydroxy-6-oxonona-2,4,7-trienedioate + H2O = (2Z)-2-hydroxypenta-2,4-dienoate + fumarate + H(+). It participates in aromatic compound metabolism; 3-phenylpropanoate degradation. Catalyzes the cleavage of the C5-C6 bond of 2-hydroxy-6-oxononadienedioate and 2-hydroxy-6-oxononatrienedioate, a dienol ring fission product of the bacterial meta-cleavage pathway for degradation of phenylpropionic acid. The sequence is that of 2-hydroxy-6-oxononadienedioate/2-hydroxy-6-oxononatrienedioate hydrolase 1 from Pseudomonas putida (Arthrobacter siderocapsulatus).